Reading from the N-terminus, the 642-residue chain is MPVITLPDGSQRQFAHPVSPLDVARDIGPGLAKACIAGRVNGKLVDAVDVIEHDAQIAIITAKDEAGLEIIRHSCAHLLGHAIKQLWPQTKMAIGPVIDKGFYYDLDLDHTLTQDDLDLLEKRMHELAEKDYDVIKEKVSWQQARDAFVARGEDYKVAILDENIRRDDRPGLYHHEEYVDMCRGPHVPNMRFCHHFTLQKTSGAYWRGDSKNKMLLRIYGTAWGDKKQLNTYLQHLEEAAKRDHRKIGKQLDLYHMQEEAPGMVFWHNDGWTLFRELETFVRMKLKAYQYQEVKGPFMMDRVLWEKTGHWDNYAEHMFTTSSENREYCIKPMNCPGHVQIFNQGLKSYRDLPLRMAEFGSCHRNEPSGSLHGLMRVRGFTQDDAHIFCTEDQVRDEVNNCIKMVYDMYGTFGFEKILVKLSTRPEKRIGSNDVWGRAEQDLAAALTENGIAFEYQPGEGAFYGPKIEFTLLDCLDRAWQCGTVQLDFSLPGRLNASYVGENNERVVPVMIHRAILGSMERFIGILTEEYAGFYPTWLVPTQVVVMNITDNQSEYVAKLTEKLSAAGIRVKADLRNEKIGFKIREHTLRRVPYMLVCGDKEVEACKVAVRTRRGKDLGSIDVNEIITKLQHEIRSRNLHQLEE.

The TGS domain occupies 1–61 (MPVITLPDGS…EHDAQIAIIT (61 aa)). The catalytic stretch occupies residues 243–534 (DHRKIGKQLD…LTEEYAGFYP (292 aa)). Zn(2+)-binding residues include cysteine 334, histidine 385, and histidine 511.

This sequence belongs to the class-II aminoacyl-tRNA synthetase family. In terms of assembly, homodimer. Zn(2+) serves as cofactor.

The protein resides in the cytoplasm. It catalyses the reaction tRNA(Thr) + L-threonine + ATP = L-threonyl-tRNA(Thr) + AMP + diphosphate + H(+). In terms of biological role, catalyzes the attachment of threonine to tRNA(Thr) in a two-step reaction: L-threonine is first activated by ATP to form Thr-AMP and then transferred to the acceptor end of tRNA(Thr). Also edits incorrectly charged L-seryl-tRNA(Thr). In Sodalis glossinidius (strain morsitans), this protein is Threonine--tRNA ligase.